A 392-amino-acid polypeptide reads, in one-letter code: Cytochrome b (392 aa).

The next 4 membrane-spanning stretches (helical) occupy residues 38–58 (FGSL…FLAM), 82–104 (WLLR…LHIF), 119–139 (VRCL…TGYV), and 185–205 (FFSL…LHLA). His88 and His102 together coordinate heme b. Residues His189 and His203 each contribute to the heme b site. Residue His208 participates in a ubiquinone binding. A run of 4 helical transmembrane segments spans residues 231-251 (FYVK…IWIF), 295-315 (SGGV…PFFK), 327-347 (IHQG…WIGC), and 354-373 (FVTI…AITP).

Belongs to the cytochrome b family. The main subunits of complex b-c1 are: cytochrome b, cytochrome c1 and the Rieske protein. It depends on heme b as a cofactor.

It is found in the mitochondrion inner membrane. Its function is as follows. Component of the ubiquinol-cytochrome c reductase complex (complex III or cytochrome b-c1 complex) that is part of the mitochondrial respiratory chain. The b-c1 complex mediates electron transfer from ubiquinol to cytochrome c. Contributes to the generation of a proton gradient across the mitochondrial membrane that is then used for ATP synthesis. In Vicia faba (Broad bean), this protein is Cytochrome b (MT-CYB).